A 275-amino-acid chain; its full sequence is Chemotaxis protein methyltransferase Cher2 (275 aa).

In terms of domain architecture, CheR-type methyltransferase spans 1-275; the sequence is MSTGNLDFEQ…CSPGIIYQAK (275 aa). S-adenosyl-L-methionine-binding positions include Asn73, Thr75, Arg79, Glu116, Asp145, 201–202, and 218–219; these read NL and RN.

In terms of assembly, monomer.

The catalysed reaction is L-glutamyl-[protein] + S-adenosyl-L-methionine = [protein]-L-glutamate 5-O-methyl ester + S-adenosyl-L-homocysteine. Methylation of the membrane-bound methyl-accepting chemotaxis proteins (MCP) to form gamma-glutamyl methyl ester residues in MCP. Methylates the McpS chemotaxis receptor. The sequence is that of Chemotaxis protein methyltransferase Cher2 (cheR2) from Pseudomonas putida (strain ATCC 47054 / DSM 6125 / CFBP 8728 / NCIMB 11950 / KT2440).